A 314-amino-acid polypeptide reads, in one-letter code: Fibrinogen-like protein 1 (314 aa).

Positions 1–22 (MGEIRSFLLVTIALMMGREIWA) are cleaved as a signal peptide. The stretch at 25–59 (NSKCLLEQERLRAQVQQLETRVKQQQARIAQLMHE) forms a coiled coil. The Fibrinogen C-terminal domain maps to 76–308 (LGGKRQYADC…SVVMKIRPND (233 aa)). Intrachain disulfides connect cysteine 85–cysteine 114 and cysteine 250–cysteine 263.

In terms of assembly, homodimer. Interacts (via the Fibrinogen C-terminal domain) with LAG3 (via Ig-like domains 1 and 2).

It is found in the secreted. Its function is as follows. Immune suppressive molecule that inhibits antigen-specific T-cell activation by acting as a major ligand of LAG3. Responsible for LAG3 T-cell inhibitory function. Binds LAG3 independently from MHC class II (MHC-II). Secreted by, and promotes growth of, hepatocytes. This is Fibrinogen-like protein 1 from Mesocricetus auratus (Golden hamster).